Reading from the N-terminus, the 389-residue chain is Probable peptidoglycan glycosyltransferase FtsW (389 aa).

At 1–14 (MPIRDWRQQSQRWP) the chain is on the cytoplasmic side. The chain crosses the membrane as a helical span at residues 15–35 (IDYWLIGALAILITLGLTMVA). The Periplasmic portion of the chain corresponds to 36-57 (SSSIAISEKRFGDPTHYLLRQM). A helical membrane pass occupies residues 58-78 (FSMGLGLMAAYIVLKIPLSFW). The Cytoplasmic segment spans residues 79–84 (RKHRGQ). The chain crosses the membrane as a helical span at residues 85-105 (LFIVGLVLLVLVLVFGREING). The Periplasmic segment spans residues 106-111 (SKRWLP). The chain crosses the membrane as a helical span at residues 112–132 (LVLMNFQVSEFMKIAVVVFMA). The Cytoplasmic segment spans residues 133 to 144 (GYLDRHATAVRE). The helical transmembrane segment at 145-165 (SFEAVIRLALPFGVMAILLLL) threads the bilayer. The Periplasmic portion of the chain corresponds to 166–168 (EPD). Residues 169–189 (FGSTFVIAVIITGMLLIAGAP) form a helical membrane-spanning segment. Topologically, residues 190–191 (WR) are cytoplasmic. The helical transmembrane segment at 192-212 (FFVMTVLPIATLLVMMVITSP) threads the bilayer. The Periplasmic portion of the chain corresponds to 213-268 (YRMARVTNFLDPWSDPFGNGYQLTQALIASGRGEWFGVGIGESVQKLLYLPDAHTD). The chain crosses the membrane as a helical span at residues 269-289 (FLFSIYAEEYGLIGVAFLALL). At 290-310 (YLTLLYRCFRIGRKAFNQTHY) the chain is on the cytoplasmic side. A helical transmembrane segment spans residues 311-331 (FGGLIAYGVGIWIVLQAMINM). The Periplasmic segment spans residues 332 to 344 (GVNLGLFPTKGLT). Residues 345–365 (LPFMSYGGSSVLMLFIGVAMV) form a helical membrane-spanning segment. Residues 366-389 (LRVDLETRQAVLEHSVDESGQGKR) are Cytoplasmic-facing.

The protein belongs to the SEDS family. FtsW subfamily.

The protein resides in the cell inner membrane. It carries out the reaction [GlcNAc-(1-&gt;4)-Mur2Ac(oyl-L-Ala-gamma-D-Glu-L-Lys-D-Ala-D-Ala)](n)-di-trans,octa-cis-undecaprenyl diphosphate + beta-D-GlcNAc-(1-&gt;4)-Mur2Ac(oyl-L-Ala-gamma-D-Glu-L-Lys-D-Ala-D-Ala)-di-trans,octa-cis-undecaprenyl diphosphate = [GlcNAc-(1-&gt;4)-Mur2Ac(oyl-L-Ala-gamma-D-Glu-L-Lys-D-Ala-D-Ala)](n+1)-di-trans,octa-cis-undecaprenyl diphosphate + di-trans,octa-cis-undecaprenyl diphosphate + H(+). It functions in the pathway cell wall biogenesis; peptidoglycan biosynthesis. Peptidoglycan polymerase that is essential for cell division. This Hydrogenovibrio crunogenus (strain DSM 25203 / XCL-2) (Thiomicrospira crunogena) protein is Probable peptidoglycan glycosyltransferase FtsW.